A 441-amino-acid chain; its full sequence is Putative T-box protein 32 (441 aa).

The segment at residues 18–199 is a DNA-binding region (T-box); the sequence is NVIGSSRTSD…TGPSAKKTPE (182 aa). The interval 268–289 is disordered; the sequence is SLSSPAALQQDSTVSSDNDFDD. Polar residues predominate over residues 273–284; sequence AALQQDSTVSSD.

The protein localises to the nucleus. The chain is Putative T-box protein 32 (tbx-32) from Caenorhabditis elegans.